The primary structure comprises 216 residues: Elongation factor Ts (216 aa).

The tract at residues 81–84 (TDFV) is involved in Mg(2+) ion dislocation from EF-Tu.

This sequence belongs to the EF-Ts family.

It localises to the cytoplasm. Its function is as follows. Associates with the EF-Tu.GDP complex and induces the exchange of GDP to GTP. It remains bound to the aminoacyl-tRNA.EF-Tu.GTP complex up to the GTP hydrolysis stage on the ribosome. In Geobacter sulfurreducens (strain ATCC 51573 / DSM 12127 / PCA), this protein is Elongation factor Ts.